The following is a 489-amino-acid chain: Glucose-6-phosphate 1-dehydrogenase (489 aa).

NADP(+) contacts are provided by residues 15-22, R49, 86-87, and K149; these read GATGDLAK and DV. 4 residues coordinate substrate: H179, K183, E217, and D236. H241 functions as the Proton acceptor in the catalytic mechanism. Substrate contacts are provided by K341 and K346.

Belongs to the glucose-6-phosphate dehydrogenase family.

The catalysed reaction is D-glucose 6-phosphate + NADP(+) = 6-phospho-D-glucono-1,5-lactone + NADPH + H(+). It participates in carbohydrate degradation; pentose phosphate pathway; D-ribulose 5-phosphate from D-glucose 6-phosphate (oxidative stage): step 1/3. Its function is as follows. Catalyzes the oxidation of glucose 6-phosphate to 6-phosphogluconolactone. The chain is Glucose-6-phosphate 1-dehydrogenase from Bacillus subtilis (strain 168).